A 122-amino-acid chain; its full sequence is uncharacterized protein (122 aa).

Residues 1 to 20 (MGFHFCIWIIFLLPPPCKKC) form the signal peptide.

Its subcellular location is the secreted. This is an uncharacterized protein from Homo sapiens (Human).